Reading from the N-terminus, the 181-residue chain is Large ribosomal subunit protein uL6 (181 aa).

Belongs to the universal ribosomal protein uL6 family. In terms of assembly, part of the 50S ribosomal subunit.

In terms of biological role, this protein binds to the 23S rRNA, and is important in its secondary structure. It is located near the subunit interface in the base of the L7/L12 stalk, and near the tRNA binding site of the peptidyltransferase center. The chain is Large ribosomal subunit protein uL6 from Phytoplasma mali (strain AT).